A 32-amino-acid polypeptide reads, in one-letter code: Cytochrome b6-f complex subunit 6 (32 aa).

The chain crosses the membrane as a helical span at residues 6–26; sequence VFYIVFIALFFGIAVGIIFAI.

This sequence belongs to the PetL family. The 4 large subunits of the cytochrome b6-f complex are cytochrome b6, subunit IV (17 kDa polypeptide, PetD), cytochrome f and the Rieske protein, while the 4 small subunits are PetG, PetL, PetM and PetN. The complex functions as a dimer.

The protein resides in the cellular thylakoid membrane. In terms of biological role, component of the cytochrome b6-f complex, which mediates electron transfer between photosystem II (PSII) and photosystem I (PSI), cyclic electron flow around PSI, and state transitions. PetL is important for photoautotrophic growth as well as for electron transfer efficiency and stability of the cytochrome b6-f complex. This Mastigocladus laminosus (Fischerella sp.) protein is Cytochrome b6-f complex subunit 6.